The sequence spans 115 residues: uncharacterized protein (115 aa).

One can recognise an MSP domain in the interval 1 to 115 (MGVEISLDPP…ETVIKLSAAE (115 aa)).

This is an uncharacterized protein from Caenorhabditis elegans.